The chain runs to 311 residues: MEATRRRQHLGATGGPGAQLGASFLQARHGSVSADEAARTAPFHLDLWFYFTLQNWVLDFGRPIAMLVFPLEWFPLNKPSVGDYFHMAYNVITPFLLLKLIERSPRTLPRSITYVSIIIFIMGASIHLVGDSVNHRLLFSGYQHHLSVRENPIIKNLKPETLIDSFELLYYYDEYLGHCMWYIPFFLILFMYFSGCFTASKAESLIPGPALLLVAPSGLYYWYLVTEGQIFILFIFTFFAMLALVLHQKRKRLFLDSNGLFLFSSFALTLLLVALWVAWLWNDPVLRKKYPGVIYVPEPWAFYTLHVSSRH.

The next 7 membrane-spanning stretches (helical) occupy residues W56–L76, V81–I101, S111–D131, C179–A199, S204–L224, V225–V245, and L260–L280.

As to quaternary structure, interacts with CRMP2. Interacts with CLN5. Interacts with CLN3.

The protein resides in the endoplasmic reticulum membrane. It is found in the endoplasmic reticulum. The sequence is that of Ceroid-lipofuscinosis neuronal protein 6 (CLN6) from Homo sapiens (Human).